The sequence spans 138 residues: MKSDSPVHRESHTGCQSPCPLRCLPARLEGSTKRRLAANARERRRMQGLNTAFDSLRKVVPQWGEDKQLSKYETLQMALSYIMALSRILSEAERYSRTDPEEWTNIQYDHIEEEQCLSYMEVRCPRDCDRYLPQTFSH.

Residues 33-85 (KRRLAANARERRRMQGLNTAFDSLRKVVPQWGEDKQLSKYETLQMALSYIMAL) enclose the bHLH domain.

It is found in the nucleus. The protein localises to the perikaryon. It localises to the cell projection. The protein resides in the axon. In terms of biological role, transcription factor that binds to DNA at the consensus sequence 5'-CAG[GC]TG-3'. Positively regulates the determination of retinal ganglion cell fate and formation of the optic nerve and retino-hypothalamic tract. Required for retinal circadian rhythm photoentrainment. Plays a role in brainstem auditory signaling and binaural processing. Regulates the differentiation of olfactory receptor neurons. During retinal neurogenesis, activates the transcription of several genes such as brn3d, coe3, cbfa2t2, glis2, elrC and xgadd45-gamma. The chain is Transcription factor Atoh7-a from Xenopus laevis (African clawed frog).